The following is a 1040-amino-acid chain: MQVLPPSSTGGPSRLFIMRPVATTLLMVAILLAGIIGYRALPVSALPEVDYPTIQVVTLYPGASPDVMTSAVTAPLERQFGQMSGLKQMSSQSSGGASVITLQFQLTLPLDVAEQEVQAAINAATNLLPSDLPNPPVYSKVNPADPPIMTLAVTSTAMPMTQVEDMVETRVAQKISQISGVGLVTLSGGQRPAVRVKLNAQAIAALGLTSETVRTAITGANVNSAKGSLDGPSRAVTLSANDQMQSAEEYRQLIIAYQNGAPIRLGDVATVEQGAENSWLGAWANKEQAIVMNVQRQPGANIISTADSIRQMLPQLTESLPKSVEVTVLSDRTTNIRASVDDTQCELMMAIALVVMIIYLFLRNIPATIIPGVAVPLSLIGTFAVMVFLDFSINNLTLMALTIATGFVVDDAIVVIENISRYIEKGEKPLAAALKGAGEIGFTIISLTFSLIAVLIPLLFMGDIVGRLFREFAITLAVAILISAVVSLTLTPMMCARMLSQESLRKQNRFSRASEKMFDRIIAAYGRGLAKVLNHPWLTLSVALSTLLLSVLLWVFIPKGFFPVQDNGIIQGTLQAPQSSSFANMAQRQRQVADVILQDPAVQSLTSFVGVDGTNPSLNSARLQINLKPLDERDDRVQKVIARLQTAVDKVPGVDLFLQPTQDLTIDTQVSRTQYQFTLQATSLDALSTWVPQLMEKLQQLPQLSDVSSDWQDKGLVAYVNVDRDSASRLGISMADVDNALYNAFGQRLISTIYTQANQYRVVLEHNTENTPGLAALGTIRLTSSDGGVVPLSSIAKIEQRFAPLSINHLDQFPVTTISFNVPDNYSLGDAVQAIMDTEKTLNLPVDITTQFQGCTLAFQSALGSTVWLIVAAVVAMYIVLGILYESFIHPITILSTLPTAGVGALLALMIAGSELDVIAIIGIILLIGIVKKNAIMMIDFALAAEREQGMSPRDAIYQACLLRFRPILMTTLAALLGALPLMLSTGVGAELRRPLGIGMVGGLVVSQVLTLFTTPVIYLLFDRLALWTKSRFACHEEEA.

The next 12 helical transmembrane spans lie at 16–36 (FIMRPVATTLLMVAILLAGII), 347–367 (LMMAIALVVMIIYLFLRNIPA), 369–389 (IIPGVAVPLSLIGTFAVMVFL), 396–416 (LTLMALTIATGFVVDDAIVVI), 440–460 (IGFTIISLTFSLIAVLIPLLF), 472–492 (FAITLAVAILISAVVSLTLTP), 537–557 (WLTLSVALSTLLLSVLLWVFI), 863–883 (LGSTVWLIVAAVVAMYIVLGI), 888–908 (FIHPITILSTLPTAGVGALLA), 911–931 (IAGSELDVIAIIGIILLIGIV), 968–988 (ILMTTLAALLGALPLMLSTGV), and 998–1018 (IGMVGGLVVSQVLTLFTTPVI).

This sequence belongs to the resistance-nodulation-cell division (RND) (TC 2.A.6) family. MdtB subfamily. Part of a tripartite efflux system composed of MdtA, MdtB and MdtC. MdtB forms a heteromultimer with MdtC.

It localises to the cell inner membrane. This is Multidrug resistance protein MdtB from Shigella boydii serotype 18 (strain CDC 3083-94 / BS512).